Consider the following 163-residue polypeptide: Nucleotide-binding protein KPN78578_03700 (163 aa).

It belongs to the YajQ family.

Its function is as follows. Nucleotide-binding protein. The sequence is that of Nucleotide-binding protein KPN78578_03700 from Klebsiella pneumoniae subsp. pneumoniae (strain ATCC 700721 / MGH 78578).